The sequence spans 508 residues: Phenylalanine--tRNA ligase alpha subunit (508 aa).

Residue alanine 2 is modified to N-acetylalanine. Position 190 is a phosphothreonine (threonine 190). Serine 193 and serine 301 each carry phosphoserine. At lysine 311 the chain carries N6-acetyllysine. L-phenylalanine contacts are provided by residues threonine 329, 372–374 (QIE), and tyrosine 412. Residue glutamate 414 participates in Mg(2+) binding. Phenylalanine 438 is an L-phenylalanine binding site.

Belongs to the class-II aminoacyl-tRNA synthetase family. Phe-tRNA synthetase alpha subunit type 2 subfamily. In terms of assembly, heterotetramer; dimer of two heterodimers formed by FARSA and FARSB.

Its subcellular location is the cytoplasm. The enzyme catalyses tRNA(Phe) + L-phenylalanine + ATP = L-phenylalanyl-tRNA(Phe) + AMP + diphosphate + H(+). The sequence is that of Phenylalanine--tRNA ligase alpha subunit (FARSA) from Homo sapiens (Human).